The primary structure comprises 541 residues: Beta-glucuronidase (541 aa).

A signal peptide spans 1 to 20; sequence MHHHPITLLSLLLGAAQSIA. 3 N-linked (GlcNAc...) asparagine glycosylation sites follow: Asn69, Asn115, and Asn157. Catalysis depends on Glu208, which acts as the Proton donor. Residues Asn217, Asn291, and Asn304 are each glycosylated (N-linked (GlcNAc...) asparagine). Glu324 acts as the Nucleophile in catalysis. Asn380, Asn426, Asn441, Asn483, and Asn512 each carry an N-linked (GlcNAc...) asparagine glycan.

It belongs to the glycosyl hydrolase 79 family. N-glycosylated.

It localises to the secreted. It catalyses the reaction a beta-D-glucuronoside + H2O = D-glucuronate + an alcohol. Beta-glucuronidase that hydrolyzes beta-glucuronosyl and 4-O-methyl-beta-glucuronosyl residues of arabinogalactan-protein. Hydrolyzed heparan sulfate only very weakly. Has no activity on xylan from birchwood. Able to catalyze the transglycosylation of glucuronic acid (GlcA) residues from p-nitrophenyl-beta-glucuronic acid (PNP beta-GlcA) to various monosaccharide acceptors such as glucose, galactose and xylose. The polypeptide is Beta-glucuronidase (Aspergillus niger (strain ATCC MYA-4892 / CBS 513.88 / FGSC A1513)).